The chain runs to 317 residues: 1-phosphatidylinositol phosphodiesterase (317 aa).

Residues 1-22 form the signal peptide; sequence MYKNYLQRTLVLLLCFILYFFT. Residues 58–196 enclose the PI-PLC X-box domain; the sequence is LAALSIPGTH…LKDVRGKILL (139 aa). His-67 (proton acceptor) is an active-site residue. His-115 acts as the Proton donor in catalysis.

Monomer.

The protein resides in the secreted. The protein localises to the cytoplasm. It catalyses the reaction a 1,2-diacyl-sn-glycero-3-phospho-(1D-myo-inositol) = 1D-myo-inositol 1,2-cyclic phosphate + a 1,2-diacyl-sn-glycerol. Cleaves glycosylphosphatidylinositol (GPI) and phosphatidylinositol (PI) anchors but not PI phosphates. Important factor in pathogenesis, PI-PLC activity is present only in virulent listeria species. It may participate in the lysis of the phagolysosomal membrane. This chain is 1-phosphatidylinositol phosphodiesterase (plcA), found in Listeria monocytogenes serovar 1/2a (strain ATCC BAA-679 / EGD-e).